Reading from the N-terminus, the 105-residue chain is NADH-quinone oxidoreductase subunit K (105 aa).

Helical transmembrane passes span leucine 8–leucine 28, isoleucine 34–phenylalanine 54, and valine 65–leucine 85.

Belongs to the complex I subunit 4L family. As to quaternary structure, NDH-1 is composed of 14 different subunits. Subunits NuoA, H, J, K, L, M, N constitute the membrane sector of the complex.

It localises to the cell inner membrane. The catalysed reaction is a quinone + NADH + 5 H(+)(in) = a quinol + NAD(+) + 4 H(+)(out). Functionally, NDH-1 shuttles electrons from NADH, via FMN and iron-sulfur (Fe-S) centers, to quinones in the respiratory chain. The immediate electron acceptor for the enzyme in this species is believed to be ubiquinone. Couples the redox reaction to proton translocation (for every two electrons transferred, four hydrogen ions are translocated across the cytoplasmic membrane), and thus conserves the redox energy in a proton gradient. In Acidithiobacillus ferrooxidans (strain ATCC 23270 / DSM 14882 / CIP 104768 / NCIMB 8455) (Ferrobacillus ferrooxidans (strain ATCC 23270)), this protein is NADH-quinone oxidoreductase subunit K.